Reading from the N-terminus, the 622-residue chain is Low affinity potassium transport system protein Kup (622 aa).

A run of 12 helical transmembrane segments spans residues 9–29, 49–69, 103–123, 137–157, 165–185, 213–233, 247–267, 276–296, 337–357, 363–383, 396–416, and 419–439; these read LPAI…TSPL, VFGF…IKYL, VIMG…TPAI, PQLD…LFMI, VGKL…GLGL, VSFI…ALYA, WFTV…ALLL, PFFL…AALA, IYIP…IVSF, LAAA…ILST, FVAL…TANL, and LLSG…VMTT.

Belongs to the HAK/KUP transporter (TC 2.A.72) family.

The protein localises to the cell inner membrane. The enzyme catalyses K(+)(in) + H(+)(in) = K(+)(out) + H(+)(out). Functionally, responsible for the low-affinity transport of potassium into the cell. Likely operates as a K(+):H(+) symporter. This Shigella flexneri serotype 5b (strain 8401) protein is Low affinity potassium transport system protein Kup.